Reading from the N-terminus, the 324-residue chain is tRNA dimethylallyltransferase (324 aa).

ATP is bound at residue Gly17–Thr24. Thr19–Thr24 provides a ligand contact to substrate. Interaction with substrate tRNA stretches follow at residues Asp42–Leu45, Gln166–Arg170, and Arg251–Arg256.

The protein belongs to the IPP transferase family. In terms of assembly, monomer. Requires Mg(2+) as cofactor.

It carries out the reaction adenosine(37) in tRNA + dimethylallyl diphosphate = N(6)-dimethylallyladenosine(37) in tRNA + diphosphate. In terms of biological role, catalyzes the transfer of a dimethylallyl group onto the adenine at position 37 in tRNAs that read codons beginning with uridine, leading to the formation of N6-(dimethylallyl)adenosine (i(6)A). The sequence is that of tRNA dimethylallyltransferase from Burkholderia pseudomallei (strain 668).